A 240-amino-acid chain; its full sequence is Ribonuclease PH (240 aa).

Residues arginine 87 and 125-127 contribute to the phosphate site; that span reads GTR.

This sequence belongs to the RNase PH family. In terms of assembly, homohexameric ring arranged as a trimer of dimers.

The enzyme catalyses tRNA(n+1) + phosphate = tRNA(n) + a ribonucleoside 5'-diphosphate. Functionally, phosphorolytic 3'-5' exoribonuclease that plays an important role in tRNA 3'-end maturation. Removes nucleotide residues following the 3'-CCA terminus of tRNAs; can also add nucleotides to the ends of RNA molecules by using nucleoside diphosphates as substrates, but this may not be physiologically important. Probably plays a role in initiation of 16S rRNA degradation (leading to ribosome degradation) during starvation. This is Ribonuclease PH from Pseudomonas syringae pv. tomato (strain ATCC BAA-871 / DC3000).